The following is a 145-amino-acid chain: D-aminoacyl-tRNA deacylase (145 aa).

A Gly-cisPro motif, important for rejection of L-amino acids motif is present at residues 137–138; that stretch reads GP.

It belongs to the DTD family. In terms of assembly, homodimer.

It localises to the cytoplasm. It catalyses the reaction glycyl-tRNA(Ala) + H2O = tRNA(Ala) + glycine + H(+). It carries out the reaction a D-aminoacyl-tRNA + H2O = a tRNA + a D-alpha-amino acid + H(+). Functionally, an aminoacyl-tRNA editing enzyme that deacylates mischarged D-aminoacyl-tRNAs. Also deacylates mischarged glycyl-tRNA(Ala), protecting cells against glycine mischarging by AlaRS. Acts via tRNA-based rather than protein-based catalysis; rejects L-amino acids rather than detecting D-amino acids in the active site. By recycling D-aminoacyl-tRNA to D-amino acids and free tRNA molecules, this enzyme counteracts the toxicity associated with the formation of D-aminoacyl-tRNA entities in vivo and helps enforce protein L-homochirality. This is D-aminoacyl-tRNA deacylase from Pseudomonas savastanoi pv. phaseolicola (strain 1448A / Race 6) (Pseudomonas syringae pv. phaseolicola (strain 1448A / Race 6)).